A 442-amino-acid polypeptide reads, in one-letter code: tRNA modification GTPase MnmE (442 aa).

3 residues coordinate (6S)-5-formyl-5,6,7,8-tetrahydrofolate: Arg21, Glu79, and Lys118. A TrmE-type G domain is found at 214–367; that stretch reads GFKIAIVGKP…LKEELQNYLN (154 aa). Asn224 provides a ligand contact to K(+). Residues 224 to 229, 243 to 249, and 268 to 271 contribute to the GTP site; these read NVGKSS, SDIAGTT, and DTAG. Ser228 contacts Mg(2+). The K(+) site is built by Ser243, Ile245, and Thr248. Mg(2+) is bound at residue Thr249. Lys442 is a binding site for (6S)-5-formyl-5,6,7,8-tetrahydrofolate.

It belongs to the TRAFAC class TrmE-Era-EngA-EngB-Septin-like GTPase superfamily. TrmE GTPase family. In terms of assembly, homodimer. Heterotetramer of two MnmE and two MnmG subunits. It depends on K(+) as a cofactor.

The protein resides in the cytoplasm. Exhibits a very high intrinsic GTPase hydrolysis rate. Involved in the addition of a carboxymethylaminomethyl (cmnm) group at the wobble position (U34) of certain tRNAs, forming tRNA-cmnm(5)s(2)U34. The chain is tRNA modification GTPase MnmE from Campylobacter jejuni (strain RM1221).